Here is a 345-residue protein sequence, read N- to C-terminus: UDP-3-O-acylglucosamine N-acyltransferase (345 aa).

Residue H241 is the Proton acceptor of the active site.

It belongs to the transferase hexapeptide repeat family. LpxD subfamily. As to quaternary structure, homotrimer.

The catalysed reaction is a UDP-3-O-[(3R)-3-hydroxyacyl]-alpha-D-glucosamine + a (3R)-hydroxyacyl-[ACP] = a UDP-2-N,3-O-bis[(3R)-3-hydroxyacyl]-alpha-D-glucosamine + holo-[ACP] + H(+). It functions in the pathway bacterial outer membrane biogenesis; LPS lipid A biosynthesis. Its function is as follows. Catalyzes the N-acylation of UDP-3-O-acylglucosamine using 3-hydroxyacyl-ACP as the acyl donor. Is involved in the biosynthesis of lipid A, a phosphorylated glycolipid that anchors the lipopolysaccharide to the outer membrane of the cell. This is UDP-3-O-acylglucosamine N-acyltransferase from Desulfotalea psychrophila (strain LSv54 / DSM 12343).